The following is a 476-amino-acid chain: Eukaryotic translation initiation factor 3 subunit L (476 aa).

The PCI domain occupies 257–452 (DAIRMFSHIL…DLDYALEKDL (196 aa)).

The protein belongs to the eIF-3 subunit L family. Component of the eukaryotic translation initiation factor 3 (eIF-3) complex.

It localises to the cytoplasm. Its function is as follows. Component of the eukaryotic translation initiation factor 3 (eIF-3) complex, which is involved in protein synthesis of a specialized repertoire of mRNAs and, together with other initiation factors, stimulates binding of mRNA and methionyl-tRNAi to the 40S ribosome. The eIF-3 complex specifically targets and initiates translation of a subset of mRNAs involved in cell proliferation. This Emericella nidulans (strain FGSC A4 / ATCC 38163 / CBS 112.46 / NRRL 194 / M139) (Aspergillus nidulans) protein is Eukaryotic translation initiation factor 3 subunit L.